A 513-amino-acid polypeptide reads, in one-letter code: Sodium/potassium/calcium exchanger 5 (513 aa).

The first 35 residues, 1 to 35 (MRTDVFLQRRKRRDVLLSIIALLLLIFAIVHLVFC), serve as a signal peptide directing secretion. Over 36-78 (AGLSFQGSSSARVRRDLENASECVQPQSSEFPEGFFTVQERKD) the chain is Extracellular. Residues 79-99 (GGILIYFMIIFYMLLSVSIVC) traverse the membrane as a helical segment. Topologically, residues 100 to 123 (DEYFLPSLEVISERLGLSQDVAGA) are cytoplasmic. The helical transmembrane segment at 124 to 144 (TFMAAGSSAPELVTAFLGVFV) threads the bilayer. Residues 145-148 (TKGD) are Extracellular-facing. Residues 149-169 (IGVSTIMGSAVYNLLCICAAC) traverse the membrane as a helical segment. Residues 170–181 (GLLSSAVGRLSC) lie on the Cytoplasmic side of the membrane. The chain crosses the membrane as a helical span at residues 182–202 (WPLFRDCVAYAISVAAVIAII). Over 203–207 (SDNRV) the chain is Extracellular. The chain crosses the membrane as a helical span at residues 208-228 (YWYDGACLLLVYGVYVAVLCF). Residues 229 to 315 (DLRISEYVMQ…KSVFSMPDHD (87 aa)) are Cytoplasmic-facing. The helical transmembrane segment at 316–336 (LKRILWVLSLPVSTLLFVSVP) threads the bilayer. Residues 337-350 (DCRRPFWKNFYMLT) lie on the Extracellular side of the membrane. The helical transmembrane segment at 351–371 (FLMSAVWISAFTYVLVWMVTI) threads the bilayer. At 372–381 (VGETLGIPDT) the chain is on the cytoplasmic side. The helical transmembrane segment at 382 to 402 (VMGMTLLAAGTSIPDTVASVM) threads the bilayer. The Extracellular portion of the chain corresponds to 403–420 (VAREGKSDMAMSNIVGSN). Residues 421-441 (VFDMLCLGLPWFIQTVFVDVG) traverse the membrane as a helical segment. The Cytoplasmic segment spans residues 442-450 (SPVEVNSSG). Residues 451-471 (LVFMSCTLLLSIIFLFLAVHI) form a helical membrane-spanning segment. Residues 472-482 (NGWKLDWKLGL) lie on the Extracellular side of the membrane. A helical membrane pass occupies residues 483–503 (VCLACYILFATLSILYELGII). Residues 504-513 (GNNPIRSCSD) are Cytoplasmic-facing.

Belongs to the Ca(2+):cation antiporter (CaCA) (TC 2.A.19) family. SLC24A subfamily. As to expression, highly expressed in melanin-producing cells. Colocalizes with melanin biosynthesis marker dct.

It localises to the golgi apparatus. The protein resides in the trans-Golgi network membrane. Its subcellular location is the melanosome. It carries out the reaction Ca(2+)(out) + K(+)(out) + 4 Na(+)(in) = Ca(2+)(in) + K(+)(in) + 4 Na(+)(out). Calcium, potassium:sodium antiporter that transports 1 Ca(2+) and 1 K(+) to the melanosome in exchange for 4 cytoplasmic Na(+). Involved in pigmentation, possibly by participating in ion transport in melanosomes. Predominant sodium-calcium exchanger in melanocytes. The chain is Sodium/potassium/calcium exchanger 5 (slc24a5) from Danio rerio (Zebrafish).